Here is a 113-residue protein sequence, read N- to C-terminus: Cell cycle protein GpsB (113 aa).

Positions 36–68 (LDMVIKDYSTFTQEIEALQAENIRLVQELDNAP) form a coiled coil.

This sequence belongs to the GpsB family. Forms polymers through the coiled coil domains. Interacts with PBP1, MreC and EzrA.

It localises to the cytoplasm. Divisome component that associates with the complex late in its assembly, after the Z-ring is formed, and is dependent on DivIC and PBP2B for its recruitment to the divisome. Together with EzrA, is a key component of the system that regulates PBP1 localization during cell cycle progression. Its main role could be the removal of PBP1 from the cell pole after pole maturation is completed. Also contributes to the recruitment of PBP1 to the division complex. Not essential for septum formation. This chain is Cell cycle protein GpsB, found in Listeria innocua serovar 6a (strain ATCC BAA-680 / CLIP 11262).